The chain runs to 110 residues: DNA-binding protein Mhun_3016 (110 aa).

The protein belongs to the PDCD5 family.

This is DNA-binding protein Mhun_3016 from Methanospirillum hungatei JF-1 (strain ATCC 27890 / DSM 864 / NBRC 100397 / JF-1).